Here is a 487-residue protein sequence, read N- to C-terminus: Cytochrome P450 monooxygenase pyvB (487 aa).

The chain crosses the membrane as a helical span at residues 17 to 37 (PAYSSVVIGALVVCLVCLVWP). Heme is bound at residue C426.

This sequence belongs to the cytochrome P450 family. Requires heme as cofactor.

The protein localises to the membrane. The protein operates within secondary metabolite biosynthesis. Functionally, cytochrome P450 monooxygenase; part of the gene cluster that mediates the biosynthesis of pyranoviolin A, a pyranonigrin analog with a C-3 methoxy group. Initially, the PKS portion of pyvA synthesizes C-10 carbon chain from 5 molecules of malonyl-CoA, which is then condensed with the thiolation (T) domain-bound glycine activated by the adenylation (A) domain. The subsequent chain release by Dieckmann condensation (DKC) could be catalyzed by the TE domain present at the C-terminus of pyvA and/or the alpha/beta hydrolase pyvD, installing the tetramic acid moiety. The FAD-dependent monooxygenase pyvC next epoxidizes one of the olefins of the polyketide part, and the epoxide ring-opening induces the dihydro-gamma-pyrone ring formation. The cytochrome P450 monooxygeanse pyvB would be responsible for the 2 consecutive reactions, in which the dihydro-gamma-pyrone is oxidized to gamma-pyrone and C-7 is hydroxylated to yield pyranonigrin F. Finally, the O-methyltransferase pyvH methylates the C-3 hydroxy group to complete the biosynthesis. This chain is Cytochrome P450 monooxygenase pyvB, found in Aspergillus violaceofuscus (strain CBS 115571).